Here is a 613-residue protein sequence, read N- to C-terminus: Ribosome-associated molecular chaperone SSB2 (613 aa).

A2 is modified (N-acetylalanine). Positions 2–391 (AEGVFQGAIG…ILTGQSTSDE (390 aa)) are nucleotide binding domain (NBD). 16–18 (TTY) is a binding site for ATP. Position 47 is a phosphothreonine (T47). ATP is bound by residues K73, 205–207 (GGT), 271–278 (ERAKRTLS), and G342. An inter-domain linker region spans residues 392 to 402 (TKDLLLLDVAP). The tract at residues 403–613 (LSLGVGMQGD…RVVTKAMSSR (211 aa)) is substrate binding domain (SBD). The Contributes to ribosome binding motif lies at 428 to 430 (KRR). T431 carries the phosphothreonine modification. A lid domain (SBDalpha) region spans residues 516-612 (SEEIEKMVNQ…KRVVTKAMSS (97 aa)). Residues 574-582 (IEAALSDAL) carry the Nuclear export signal motif. Positions 601-613 (GLKRVVTKAMSSR) are required for interaction with ribosomes.

The protein belongs to the heat shock protein 70 family. Ssb-type Hsp70 subfamily. Binds to ribosomes. Binds close to the ribosomal tunnel exit via contacts with both ribosomal proteins RPL35, RPL39 and RPL19, and rRNA. Directly interacts with nascent polypeptides. This interaction is dependent on the ribosome-associated complex (RAC). Interacts with SSE1.

The protein localises to the cytoplasm. It catalyses the reaction ATP + H2O = ADP + phosphate + H(+). Its function is as follows. Ribosome-bound, Hsp70-type chaperone that assists in the cotranslational folding of newly synthesized proteins in the cytosol. Stimulates folding by interacting with nascent chains, binding to short, largely hydrophobic sequences exposed by unfolded proteins, thereby stabilizing longer, more slowly translated, and aggregation-prone nascent polypeptides and domains that cannot fold stably until fully synthesized. The Hsp70-protein substrate interaction depends on ATP-binding and on allosteric regulation between the NBD and the SBD. The ATP-bound state is characterized by a fast exchange rate of substrate (low affinity state), while in the ADP-bound state exchange is much slower (high affinity state). During the Hsp70 cycle, the chaperone switches between the ATP-bound state (open conformation) and the ADP-bound state (closed conformation) by major conformational rearrangements involving mainly the lid domain. Ssb cooperates with a specific Hsp40/Hsp70 co-chaperone termed the ribosome-associated complex (RAC), which stimulates the ATPase activity of the ribosome-associated pool of Ssbs and switches it to the high affinity substrate binding state. Hsp110 chaperone SSE1 and FES1 act as nucleotide exchange factors that cause substrate release. This Saccharomyces cerevisiae (strain ATCC 204508 / S288c) (Baker's yeast) protein is Ribosome-associated molecular chaperone SSB2.